Here is a 143-residue protein sequence, read N- to C-terminus: Large ribosomal subunit protein uL11 (143 aa).

Belongs to the universal ribosomal protein uL11 family. In terms of assembly, part of the ribosomal stalk of the 50S ribosomal subunit. Interacts with L10 and the large rRNA to form the base of the stalk. L10 forms an elongated spine to which L12 dimers bind in a sequential fashion forming a multimeric L10(L12)X complex. One or more lysine residues are methylated.

In terms of biological role, forms part of the ribosomal stalk which helps the ribosome interact with GTP-bound translation factors. In Bifidobacterium adolescentis (strain ATCC 15703 / DSM 20083 / NCTC 11814 / E194a), this protein is Large ribosomal subunit protein uL11.